The following is a 1435-amino-acid chain: Gag-Pol polyprotein (1435 aa).

A lipid anchor (N-myristoyl glycine; by host) is attached at Gly2. The tract at residues 7-31 is interaction with Gp41; that stretch reads VLSGGELDRWEKIRLRPGGKKKYKL. The interaction with host CALM1 stretch occupies residues 8–43; that stretch reads LSGGELDRWEKIRLRPGGKKKYKLKHIVWASRELER. Residues 12–19 are interaction with host AP3D1; the sequence is ELDRWEKI. Residues 14 to 33 form an interaction with membrane phosphatidylinositol 4,5-bisphosphate and RNA region; the sequence is DRWEKIRLRPGGKKKYKLKH. Positions 16–22 match the Nuclear export signal motif; sequence WEKIRLR. The short motif at 26–32 is the Nuclear localization signal element; the sequence is KKKYKLK. The interaction with membrane phosphatidylinositol 4,5-bisphosphate stretch occupies residues 73–77; that stretch reads EELKS. Residues 106-127 form a disordered region; sequence EEQNKSKKKAQQAAADTGNSSQ. Tyr132 carries the phosphotyrosine; by host modification. Residues 189–227 are interaction with human PPIA/CYPA and NUP153; it reads NTVGGHQAAMQMLKETINEEAAEWDRLHPVQAGPVAPGQ. The tract at residues 277–363 is dimerization/Multimerization of capsid protein p24; the sequence is YSPSSILDIK…GGPGHKARVL (87 aa). 2 CCHC-type zinc fingers span residues 390–407 and 411–428; these read VKCFNCGKEGHIAKNCRA and KGCWKCGKEGHQMKDCTE. The segment at 489–493 is dimerization of protease; it reads PQITL. The 70-residue stretch at 508-577 folds into the Peptidase A2 domain; sequence KEALLDTGAD…TPVNIIGRNL (70 aa). The For protease activity; shared with dimeric partner role is filled by Asp513. 2 dimerization of protease regions span residues 537–543 and 576–588; these read GIGGFIK and NLLTQIGCTLNFP. The Reverse transcriptase domain maps to 631–821; the sequence is EGKISKIGPE…PPFLWMGYEL (191 aa). Mg(2+) contacts are provided by Asp697, Asp772, and Asp773. Residues 814 to 822 form an RT 'primer grip' region; sequence FLWMGYELH. The short motif at 985 to 1001 is the Tryptophan repeat motif element; sequence WEAWWTDYWQATWIPEW. Residues 1021–1144 form the RNase H type-1 domain; that stretch reads IVGAETFYVD…VDKLVSAGIR (124 aa). Positions 1030, 1065, 1085, and 1136 each coordinate Mg(2+). The Integrase-type zinc-finger motif lies at 1150–1191; the sequence is DGIDKAQEEHEKYHTNWRAMASDFNLPPVVAKEIVASCNKCQ. Residues His1159, His1163, Cys1187, and Cys1190 each contribute to the Zn(2+) site. Positions 1201 to 1351 constitute an Integrase catalytic domain; that stretch reads VDCSPGIWQL…SAGERIVDII (151 aa). Mg(2+) is bound by residues Asp1211, Asp1263, and Glu1299. A DNA-binding region (integrase-type) is located at residues 1370–1417; it reads FRVYYRDSRDPLWKGPAKLLWKGEGAVVIQDNSDIKVVPRRKAKIIRD.

In terms of assembly, homotrimer; further assembles as hexamers of trimers. Interacts with gp41 (via C-terminus). Interacts with host CALM1; this interaction induces a conformational change in the Matrix protein, triggering exposure of the myristate group. Interacts with host AP3D1; this interaction allows the polyprotein trafficking to multivesicular bodies during virus assembly. Part of the pre-integration complex (PIC) which is composed of viral genome, matrix protein, Vpr and integrase. As to quaternary structure, homodimer; the homodimer further multimerizes as homohexamers or homopentamers. Interacts with human PPIA/CYPA; This interaction stabilizes the capsid. Interacts with human NUP153. Interacts with host PDZD8; this interaction stabilizes the capsid. Interacts with monkey TRIM5; this interaction destabilizes the capsid. Homodimer, whose active site consists of two apposed aspartic acid residues. In terms of assembly, heterodimer of p66 RT and p51 RT (RT p66/p51). Heterodimerization of RT is essential for DNA polymerase activity. The overall folding of the subdomains is similar in p66 RT and p51 RT but the spatial arrangements of the subdomains are dramatically different. As to quaternary structure, homotetramer; may further associate as a homohexadecamer. Part of the pre-integration complex (PIC) which is composed of viral genome, matrix protein, Vpr and integrase. Interacts with human SMARCB1/INI1 and human PSIP1/LEDGF isoform 1. Interacts with human KPNA3; this interaction might play a role in nuclear import of the pre-integration complex. Interacts with human NUP153; this interaction might play a role in nuclear import of the pre-integration complex. Requires Mg(2+) as cofactor. Post-translationally, specific enzymatic cleavages by the viral protease yield mature proteins. The protease is released by autocatalytic cleavage. The polyprotein is cleaved during and after budding, this process is termed maturation. Proteolytic cleavage of p66 RT removes the RNase H domain to yield the p51 RT subunit. Nucleocapsid protein p7 might be further cleaved after virus entry. In terms of processing, tyrosine phosphorylated presumably in the virion by a host kinase. Phosphorylation is apparently not a major regulator of membrane association. Phosphorylated possibly by host MAPK1; this phosphorylation is necessary for Pin1-mediated virion uncoating. Post-translationally, methylated by host PRMT6, impairing its function by reducing RNA annealing and the initiation of reverse transcription.

The protein localises to the host cell membrane. The protein resides in the host endosome. Its subcellular location is the host multivesicular body. It localises to the virion membrane. It is found in the host nucleus. The protein localises to the host cytoplasm. The protein resides in the virion. The catalysed reaction is Specific for a P1 residue that is hydrophobic, and P1' variable, but often Pro.. It carries out the reaction Endohydrolysis of RNA in RNA/DNA hybrids. Three different cleavage modes: 1. sequence-specific internal cleavage of RNA. Human immunodeficiency virus type 1 and Moloney murine leukemia virus enzymes prefer to cleave the RNA strand one nucleotide away from the RNA-DNA junction. 2. RNA 5'-end directed cleavage 13-19 nucleotides from the RNA end. 3. DNA 3'-end directed cleavage 15-20 nucleotides away from the primer terminus.. It catalyses the reaction 3'-end directed exonucleolytic cleavage of viral RNA-DNA hybrid.. The enzyme catalyses DNA(n) + a 2'-deoxyribonucleoside 5'-triphosphate = DNA(n+1) + diphosphate. Its activity is regulated as follows. Protease: The viral protease is inhibited by many synthetic protease inhibitors (PIs), such as amprenavir, atazanavir, indinavir, loprinavir, nelfinavir, ritonavir and saquinavir. Use of protease inhibitors in tritherapy regimens permit more ambitious therapeutic strategies. Reverse transcriptase/ribonuclease H: RT can be inhibited either by nucleoside RT inhibitors (NRTIs) or by non nucleoside RT inhibitors (NNRTIs). NRTIs act as chain terminators, whereas NNRTIs inhibit DNA polymerization by binding a small hydrophobic pocket near the RT active site and inducing an allosteric change in this region. Classical NRTIs are abacavir, adefovir (PMEA), didanosine (ddI), lamivudine (3TC), stavudine (d4T), tenofovir (PMPA), zalcitabine (ddC), and zidovudine (AZT). Classical NNRTIs are atevirdine (BHAP U-87201E), delavirdine, efavirenz (DMP-266), emivirine (I-EBU), and nevirapine (BI-RG-587). The tritherapies used as a basic effective treatment of AIDS associate two NRTIs and one NNRTI. In terms of biological role, mediates, with Gag polyprotein, the essential events in virion assembly, including binding the plasma membrane, making the protein-protein interactions necessary to create spherical particles, recruiting the viral Env proteins, and packaging the genomic RNA via direct interactions with the RNA packaging sequence (Psi). Gag-Pol polyprotein may regulate its own translation, by the binding genomic RNA in the 5'-UTR. At low concentration, the polyprotein would promote translation, whereas at high concentration, the polyprotein would encapsidate genomic RNA and then shut off translation. Targets the polyprotein to the plasma membrane via a multipartite membrane-binding signal, that includes its myristoylated N-terminus. Matrix protein is part of the pre-integration complex. Implicated in the release from host cell mediated by Vpu. Binds to RNA. Its function is as follows. Forms the conical core that encapsulates the genomic RNA-nucleocapsid complex in the virion. Most core are conical, with only 7% tubular. The core is constituted by capsid protein hexamer subunits. The core is disassembled soon after virion entry. Host restriction factors such as TRIM5-alpha or TRIMCyp bind retroviral capsids and cause premature capsid disassembly, leading to blocks in reverse transcription. Capsid restriction by TRIM5 is one of the factors which restricts HIV-1 to the human species. Host PIN1 apparently facilitates the virion uncoating. On the other hand, interactions with PDZD8 or CYPA stabilize the capsid. Functionally, encapsulates and protects viral dimeric unspliced genomic RNA (gRNA). Binds these RNAs through its zinc fingers. Acts as a nucleic acid chaperone which is involved in rearangement of nucleic acid secondary structure during gRNA retrotranscription. Also facilitates template switch leading to recombination. As part of the polyprotein, participates in gRNA dimerization, packaging, tRNA incorporation and virion assembly. In terms of biological role, aspartyl protease that mediates proteolytic cleavages of Gag and Gag-Pol polyproteins during or shortly after the release of the virion from the plasma membrane. Cleavages take place as an ordered, step-wise cascade to yield mature proteins. This process is called maturation. Displays maximal activity during the budding process just prior to particle release from the cell. Also cleaves Nef and Vif, probably concomitantly with viral structural proteins on maturation of virus particles. Hydrolyzes host EIF4GI and PABP1 in order to shut off the capped cellular mRNA translation. The resulting inhibition of cellular protein synthesis serves to ensure maximal viral gene expression and to evade host immune response. Also mediates cleavage of host YTHDF3. Mediates cleavage of host CARD8, thereby activating the CARD8 inflammasome, leading to the clearance of latent HIV-1 in patient CD4(+) T-cells after viral reactivation; in contrast, HIV-1 can evade CARD8-sensing when its protease remains inactive in infected cells prior to viral budding. Multifunctional enzyme that converts the viral RNA genome into dsDNA in the cytoplasm, shortly after virus entry into the cell. This enzyme displays a DNA polymerase activity that can copy either DNA or RNA templates, and a ribonuclease H (RNase H) activity that cleaves the RNA strand of RNA-DNA heteroduplexes in a partially processive 3' to 5' endonucleasic mode. Conversion of viral genomic RNA into dsDNA requires many steps. A tRNA(3)-Lys binds to the primer-binding site (PBS) situated at the 5'-end of the viral RNA. RT uses the 3' end of the tRNA primer to perform a short round of RNA-dependent minus-strand DNA synthesis. The reading proceeds through the U5 region and ends after the repeated (R) region which is present at both ends of viral RNA. The portion of the RNA-DNA heteroduplex is digested by the RNase H, resulting in a ssDNA product attached to the tRNA primer. This ssDNA/tRNA hybridizes with the identical R region situated at the 3' end of viral RNA. This template exchange, known as minus-strand DNA strong stop transfer, can be either intra- or intermolecular. RT uses the 3' end of this newly synthesized short ssDNA to perform the RNA-dependent minus-strand DNA synthesis of the whole template. RNase H digests the RNA template except for two polypurine tracts (PPTs) situated at the 5'-end and near the center of the genome. It is not clear if both polymerase and RNase H activities are simultaneous. RNase H probably can proceed both in a polymerase-dependent (RNA cut into small fragments by the same RT performing DNA synthesis) and a polymerase-independent mode (cleavage of remaining RNA fragments by free RTs). Secondly, RT performs DNA-directed plus-strand DNA synthesis using the PPTs that have not been removed by RNase H as primers. PPTs and tRNA primers are then removed by RNase H. The 3' and 5' ssDNA PBS regions hybridize to form a circular dsDNA intermediate. Strand displacement synthesis by RT to the PBS and PPT ends produces a blunt ended, linear dsDNA copy of the viral genome that includes long terminal repeats (LTRs) at both ends. Its function is as follows. Catalyzes viral DNA integration into the host chromosome, by performing a series of DNA cutting and joining reactions. This enzyme activity takes place after virion entry into a cell and reverse transcription of the RNA genome in dsDNA. The first step in the integration process is 3' processing. This step requires a complex comprising the viral genome, matrix protein, Vpr and integrase. This complex is called the pre-integration complex (PIC). The integrase protein removes 2 nucleotides from each 3' end of the viral DNA, leaving recessed CA OH's at the 3' ends. In the second step, the PIC enters cell nucleus. This process is mediated through integrase and Vpr proteins, and allows the virus to infect a non dividing cell. This ability to enter the nucleus is specific of lentiviruses, other retroviruses cannot and rely on cell division to access cell chromosomes. In the third step, termed strand transfer, the integrase protein joins the previously processed 3' ends to the 5' ends of strands of target cellular DNA at the site of integration. The 5'-ends are produced by integrase-catalyzed staggered cuts, 5 bp apart. A Y-shaped, gapped, recombination intermediate results, with the 5'-ends of the viral DNA strands and the 3' ends of target DNA strands remaining unjoined, flanking a gap of 5 bp. The last step is viral DNA integration into host chromosome. This involves host DNA repair synthesis in which the 5 bp gaps between the unjoined strands are filled in and then ligated. Since this process occurs at both cuts flanking the HIV genome, a 5 bp duplication of host DNA is produced at the ends of HIV-1 integration. Alternatively, Integrase may catalyze the excision of viral DNA just after strand transfer, this is termed disintegration. In Human immunodeficiency virus type 1 group M subtype B (strain 89.6) (HIV-1), this protein is Gag-Pol polyprotein (gag-pol).